The primary structure comprises 155 residues: Endoribonuclease YbeY (155 aa).

Positions 116, 120, and 126 each coordinate Zn(2+).

The protein belongs to the endoribonuclease YbeY family. Requires Zn(2+) as cofactor.

Its subcellular location is the cytoplasm. Its function is as follows. Single strand-specific metallo-endoribonuclease involved in late-stage 70S ribosome quality control and in maturation of the 3' terminus of the 16S rRNA. This Colwellia psychrerythraea (strain 34H / ATCC BAA-681) (Vibrio psychroerythus) protein is Endoribonuclease YbeY.